Consider the following 158-residue polypeptide: Xanthine-guanine phosphoribosyltransferase (158 aa).

5-phospho-alpha-D-ribose 1-diphosphate contacts are provided by residues 38 to 39 (RG) and 90 to 98 (DDLVDTGGT). Position 91 (aspartate 91) interacts with Mg(2+). Aspartate 94 and isoleucine 137 together coordinate guanine. Residues aspartate 94 and isoleucine 137 each contribute to the xanthine site. GMP-binding positions include 94 to 98 (DTGGT) and 136 to 137 (WI).

It belongs to the purine/pyrimidine phosphoribosyltransferase family. XGPT subfamily. In terms of assembly, homotetramer. It depends on Mg(2+) as a cofactor.

The protein localises to the cell inner membrane. It carries out the reaction GMP + diphosphate = guanine + 5-phospho-alpha-D-ribose 1-diphosphate. The catalysed reaction is XMP + diphosphate = xanthine + 5-phospho-alpha-D-ribose 1-diphosphate. The enzyme catalyses IMP + diphosphate = hypoxanthine + 5-phospho-alpha-D-ribose 1-diphosphate. Its pathway is purine metabolism; GMP biosynthesis via salvage pathway; GMP from guanine: step 1/1. It functions in the pathway purine metabolism; XMP biosynthesis via salvage pathway; XMP from xanthine: step 1/1. Functionally, purine salvage pathway enzyme that catalyzes the transfer of the ribosyl-5-phosphate group from 5-phospho-alpha-D-ribose 1-diphosphate (PRPP) to the N9 position of the 6-oxopurines guanine and xanthine to form the corresponding ribonucleotides GMP (guanosine 5'-monophosphate) and XMP (xanthosine 5'-monophosphate), with the release of PPi. To a lesser extent, also acts on hypoxanthine. The sequence is that of Xanthine-guanine phosphoribosyltransferase from Buchnera aphidicola subsp. Acyrthosiphon pisum (strain APS) (Acyrthosiphon pisum symbiotic bacterium).